The following is a 361-amino-acid chain: 3-isopropylmalate dehydrogenase (361 aa).

78-91 (GTQWDSLPRHLRPE) is a binding site for NAD(+). The substrate site is built by R98, R108, R136, and D226. D226, D250, and D254 together coordinate Mg(2+). 284–296 (GSAPDIAGQDKAN) is a binding site for NAD(+).

The protein belongs to the isocitrate and isopropylmalate dehydrogenases family. LeuB type 1 subfamily. As to quaternary structure, homodimer. Mg(2+) serves as cofactor. Requires Mn(2+) as cofactor.

Its subcellular location is the cytoplasm. The enzyme catalyses (2R,3S)-3-isopropylmalate + NAD(+) = 4-methyl-2-oxopentanoate + CO2 + NADH. It participates in amino-acid biosynthesis; L-leucine biosynthesis; L-leucine from 3-methyl-2-oxobutanoate: step 3/4. Functionally, catalyzes the oxidation of 3-carboxy-2-hydroxy-4-methylpentanoate (3-isopropylmalate) to 3-carboxy-4-methyl-2-oxopentanoate. The product decarboxylates to 4-methyl-2 oxopentanoate. The protein is 3-isopropylmalate dehydrogenase of Thermosynechococcus vestitus (strain NIES-2133 / IAM M-273 / BP-1).